We begin with the raw amino-acid sequence, 330 residues long: Type I restriction enzyme MpnII specificity subunit (330 aa).

It belongs to the type-I restriction system S methylase family. The methyltransferase is composed of M and S polypeptides.

Functionally, the specificity (S) subunit of a type I restriction enzyme; this subunit dictates DNA sequence specificity. The M and S subunits together form a methyltransferase (MTase) that probably methylates A-2 on the top strand and A-3 on the bottom strand of the sequence 5'-GAN(7)TAY-3'. As the bacterial DNA is methylated on this sequence and this is the only type I methylase in the genome, it is probably responsible for all of the methylation on this site in the genome. The R subunit has multiple frameshifts and is probably not expressed in this bacteria. The chain is Type I restriction enzyme MpnII specificity subunit from Mycoplasma pneumoniae (strain ATCC 29342 / M129 / Subtype 1) (Mycoplasmoides pneumoniae).